A 382-amino-acid polypeptide reads, in one-letter code: MSNRIASDSVMTHTLLVMAGGTGGHVFPGLAVAQALKEQNWHIHWLGTAQRMEADLVPKAGFEISFIDIAGVRGNGLVRLLAAPFKIIKAVIQARGVIKQVKPDVVIGMGGFASGPGGVAAWLMGKPLVLHEQNAAPGMTNRLLARIANKVLTGFAGTFDAQKTADRQGQDVSDSAKYQWVGNPVRAGFATIMPKQISGISRATNVLILGGSLGAKALNENVPLALAKQNEIKVRHQCGKGHLDSVTQLYQNQLGDSGDWQVDEFVEDMPQAYQWADLVICRAGALTVAEVAASGVAAIFVPLPHAVDDHQTKNAQTLVEHEAGYLLAQNELVQGGLTSLLEACLAQPNMLVEMGNKARKLARLDAVQRVTHCCQLLVEKAQ.

Residues 22-24, Asn-134, Arg-186, Ser-212, 285-290, and Gln-311 contribute to the UDP-N-acetyl-alpha-D-glucosamine site; these read TGG and ALTVAE.

It belongs to the glycosyltransferase 28 family. MurG subfamily.

It is found in the cell inner membrane. It carries out the reaction di-trans,octa-cis-undecaprenyl diphospho-N-acetyl-alpha-D-muramoyl-L-alanyl-D-glutamyl-meso-2,6-diaminopimeloyl-D-alanyl-D-alanine + UDP-N-acetyl-alpha-D-glucosamine = di-trans,octa-cis-undecaprenyl diphospho-[N-acetyl-alpha-D-glucosaminyl-(1-&gt;4)]-N-acetyl-alpha-D-muramoyl-L-alanyl-D-glutamyl-meso-2,6-diaminopimeloyl-D-alanyl-D-alanine + UDP + H(+). It participates in cell wall biogenesis; peptidoglycan biosynthesis. Cell wall formation. Catalyzes the transfer of a GlcNAc subunit on undecaprenyl-pyrophosphoryl-MurNAc-pentapeptide (lipid intermediate I) to form undecaprenyl-pyrophosphoryl-MurNAc-(pentapeptide)GlcNAc (lipid intermediate II). This is UDP-N-acetylglucosamine--N-acetylmuramyl-(pentapeptide) pyrophosphoryl-undecaprenol N-acetylglucosamine transferase from Pseudoalteromonas atlantica (strain T6c / ATCC BAA-1087).